We begin with the raw amino-acid sequence, 349 residues long: Heat-inducible transcription repressor HrcA (349 aa).

The protein belongs to the HrcA family.

In terms of biological role, negative regulator of class I heat shock genes (grpE-dnaK-dnaJ and groELS operons). Prevents heat-shock induction of these operons. The polypeptide is Heat-inducible transcription repressor HrcA (Xylella fastidiosa (strain M23)).